The primary structure comprises 290 residues: Acetylglutamate kinase (290 aa).

Substrate-binding positions include 65–66 (GG), arginine 87, and asparagine 186.

The protein belongs to the acetylglutamate kinase family. ArgB subfamily.

The protein resides in the cytoplasm. It catalyses the reaction N-acetyl-L-glutamate + ATP = N-acetyl-L-glutamyl 5-phosphate + ADP. It functions in the pathway amino-acid biosynthesis; L-arginine biosynthesis; N(2)-acetyl-L-ornithine from L-glutamate: step 2/4. Its function is as follows. Catalyzes the ATP-dependent phosphorylation of N-acetyl-L-glutamate. The polypeptide is Acetylglutamate kinase (Mycobacterium sp. (strain JLS)).